The primary structure comprises 371 residues: tRNA-specific 2-thiouridylase MnmA 2 (371 aa).

ATP is bound by residues 13-20 (GMSGGVDS) and Met39. An interaction with target base in tRNA region spans residues 99 to 101 (NPD). The active-site Nucleophile is the Cys104. The cysteines at positions 104 and 200 are disulfide-linked. Gly128 serves as a coordination point for ATP. The tract at residues 150–152 (KDQ) is interaction with tRNA. The Cysteine persulfide intermediate role is filled by Cys200. The segment at 308-309 (RY) is interaction with tRNA.

This sequence belongs to the MnmA/TRMU family.

Its subcellular location is the cytoplasm. The enzyme catalyses S-sulfanyl-L-cysteinyl-[protein] + uridine(34) in tRNA + AH2 + ATP = 2-thiouridine(34) in tRNA + L-cysteinyl-[protein] + A + AMP + diphosphate + H(+). Catalyzes the 2-thiolation of uridine at the wobble position (U34) of tRNA, leading to the formation of s(2)U34. In Geobacillus kaustophilus (strain HTA426), this protein is tRNA-specific 2-thiouridylase MnmA 2.